Here is a 183-residue protein sequence, read N- to C-terminus: Shikimate kinase (183 aa).

An ATP-binding site is contributed by 25–30; sequence GAGKTT. Residue Thr-29 coordinates Mg(2+). The substrate site is built by Asp-47, Arg-71, and Gly-93. Arg-131 provides a ligand contact to ATP. Residue Arg-150 coordinates substrate.

This sequence belongs to the shikimate kinase family. As to quaternary structure, monomer. The cofactor is Mg(2+).

The protein localises to the cytoplasm. The catalysed reaction is shikimate + ATP = 3-phosphoshikimate + ADP + H(+). Its pathway is metabolic intermediate biosynthesis; chorismate biosynthesis; chorismate from D-erythrose 4-phosphate and phosphoenolpyruvate: step 5/7. Catalyzes the specific phosphorylation of the 3-hydroxyl group of shikimic acid using ATP as a cosubstrate. This chain is Shikimate kinase, found in Dechloromonas aromatica (strain RCB).